The primary structure comprises 257 residues: Phosphonates import ATP-binding protein PhnC (257 aa).

The region spanning 2–246 (IEFRNVSKVY…KFAEIYGDVA (245 aa)) is the ABC transporter domain. 35–42 (GLSGAGKS) contributes to the ATP binding site.

It belongs to the ABC transporter superfamily. Phosphonates importer (TC 3.A.1.9.1) family. The complex is composed of two ATP-binding proteins (PhnC), two transmembrane proteins (PhnE) and a solute-binding protein (PhnD).

It is found in the cell membrane. It carries out the reaction phosphonate(out) + ATP + H2O = phosphonate(in) + ADP + phosphate + H(+). Its function is as follows. Part of the ABC transporter complex PhnCDE involved in phosphonates import. Responsible for energy coupling to the transport system. The chain is Phosphonates import ATP-binding protein PhnC from Bacillus cereus (strain ATCC 14579 / DSM 31 / CCUG 7414 / JCM 2152 / NBRC 15305 / NCIMB 9373 / NCTC 2599 / NRRL B-3711).